Consider the following 548-residue polypeptide: Protein NRT1/ PTR FAMILY 2.4 (548 aa).

A run of 12 helical transmembrane segments spans residues 29-49 (TLLG…VFLI), 65-85 (IVNG…DSFF), 88-108 (IPVI…LTLI), 136-156 (ILYA…FILA), 172-192 (FFNW…TAIV), 200-220 (WKLG…IFVA), 316-336 (LVPL…QMSM), 354-374 (VSAG…IILN), 393-413 (LQKV…SAVV), 429-449 (VLWL…HFPA), 468-488 (SLTS…IDVI), and 508-528 (YLVL…CSWF).

The protein belongs to the major facilitator superfamily. Proton-dependent oligopeptide transporter (POT/PTR) (TC 2.A.17) family. In terms of tissue distribution, strongly expressed in the root stele.

It is found in the membrane. Functionally, transporter involved in a passive nitrate efflux. In Arabidopsis thaliana (Mouse-ear cress), this protein is Protein NRT1/ PTR FAMILY 2.4 (NPF2.4).